The following is a 401-amino-acid chain: Tumor necrosis factor receptor superfamily member 11B (401 aa).

The first 21 residues, methionine 1 to glutamine 21, serve as a signal peptide directing secretion. TNFR-Cys repeat units follow at residues phenylalanine 24 to cysteine 62, cysteine 65 to cysteine 105, cysteine 107 to cysteine 142, and cysteine 145 to cysteine 185. Disulfide bonds link cysteine 41–cysteine 54, cysteine 44–cysteine 62, cysteine 65–cysteine 80, cysteine 83–cysteine 97, cysteine 87–cysteine 105, cysteine 107–cysteine 118, cysteine 124–cysteine 142, and cysteine 145–cysteine 160. N-linked (GlcNAc...) asparagine glycosylation is present at asparagine 98. Asparagine 152, asparagine 165, and asparagine 178 each carry an N-linked (GlcNAc...) asparagine glycan. Cysteine 166 and cysteine 185 are joined by a disulfide. Death domains are found at residues aspartate 198–lysine 269 and isoleucine 270–leucine 365. Asparagine 289 carries N-linked (GlcNAc...) asparagine glycosylation.

In terms of assembly, homodimer. Interacts with TNFSF10 and TNFSF11. In terms of processing, N-glycosylated. Contains sialic acid residues. The N-terminus is blocked. Highly expressed in adult lung, heart, kidney, liver, spleen, thymus, prostate, ovary, small intestine, thyroid, lymph node, trachea, adrenal gland, testis, and bone marrow. Detected at very low levels in brain, placenta and skeletal muscle. Highly expressed in fetal kidney, liver and lung.

Its subcellular location is the secreted. Acts as a decoy receptor for TNFSF11/RANKL and thereby neutralizes its function in osteoclastogenesis. Inhibits the activation of osteoclasts and promotes osteoclast apoptosis in vitro. Bone homeostasis seems to depend on the local ratio between TNFSF11 and TNFRSF11B. May also play a role in preventing arterial calcification. May act as decoy receptor for TNFSF10/TRAIL and protect against apoptosis. TNFSF10/TRAIL binding blocks the inhibition of osteoclastogenesis. This Homo sapiens (Human) protein is Tumor necrosis factor receptor superfamily member 11B (TNFRSF11B).